The following is a 48-amino-acid chain: MVREKKNPSSAAVSAASVKGDAGPTQHYGGGKRTSQNQQYKKHNMGQS.

A disordered region spans residues 1-48; that stretch reads MVREKKNPSSAAVSAASVKGDAGPTQHYGGGKRTSQNQQYKKHNMGQS. Low complexity predominate over residues 9–18; that stretch reads SSAAVSAASV.

This is an uncharacterized protein from Bacillus subtilis (strain 168).